Reading from the N-terminus, the 197-residue chain is Elongation factor Ts (197 aa).

The involved in Mg(2+) ion dislocation from EF-Tu stretch occupies residues 81 to 84 (TDFV).

The protein belongs to the EF-Ts family.

The protein localises to the cytoplasm. Associates with the EF-Tu.GDP complex and induces the exchange of GDP to GTP. It remains bound to the aminoacyl-tRNA.EF-Tu.GTP complex up to the GTP hydrolysis stage on the ribosome. This Thermotoga neapolitana (strain ATCC 49049 / DSM 4359 / NBRC 107923 / NS-E) protein is Elongation factor Ts.